The chain runs to 156 residues: Large ribosomal subunit protein uL22 (156 aa).

The disordered stretch occupies residues 114–156; the sequence is VESRPKQEKGGKAGASKASSRAARAQGSKAAAAKKTESKGGTS. Over residues 127 to 146 the composition is skewed to low complexity; that stretch reads GASKASSRAARAQGSKAAAA. Basic and acidic residues predominate over residues 147-156; it reads KKTESKGGTS.

The protein belongs to the universal ribosomal protein uL22 family. Part of the 50S ribosomal subunit.

In terms of biological role, this protein binds specifically to 23S rRNA; its binding is stimulated by other ribosomal proteins, e.g. L4, L17, and L20. It is important during the early stages of 50S assembly. It makes multiple contacts with different domains of the 23S rRNA in the assembled 50S subunit and ribosome. Functionally, the globular domain of the protein is located near the polypeptide exit tunnel on the outside of the subunit, while an extended beta-hairpin is found that lines the wall of the exit tunnel in the center of the 70S ribosome. This is Large ribosomal subunit protein uL22 from Mycobacteroides abscessus (strain ATCC 19977 / DSM 44196 / CCUG 20993 / CIP 104536 / JCM 13569 / NCTC 13031 / TMC 1543 / L948) (Mycobacterium abscessus).